Here is a 286-residue protein sequence, read N- to C-terminus: Pantothenate synthetase (286 aa).

An ATP-binding site is contributed by 30-37; sequence MGYFHEGH. His37 functions as the Proton donor in the catalytic mechanism. Gln61 contacts (R)-pantoate. Position 61 (Gln61) interacts with beta-alanine. 147 to 150 contributes to the ATP binding site; it reads GKKD. Gln153 contacts (R)-pantoate. 184 to 187 is a binding site for ATP; it reads MSSR.

This sequence belongs to the pantothenate synthetase family. In terms of assembly, homodimer.

The protein resides in the cytoplasm. It catalyses the reaction (R)-pantoate + beta-alanine + ATP = (R)-pantothenate + AMP + diphosphate + H(+). It participates in cofactor biosynthesis; (R)-pantothenate biosynthesis; (R)-pantothenate from (R)-pantoate and beta-alanine: step 1/1. In terms of biological role, catalyzes the condensation of pantoate with beta-alanine in an ATP-dependent reaction via a pantoyl-adenylate intermediate. The sequence is that of Pantothenate synthetase from Syntrophus aciditrophicus (strain SB).